The sequence spans 35 residues: Water stress-responsive protein 7 (35 aa).

The chain is Water stress-responsive protein 7 from Pinus pinaster (Maritime pine).